A 453-amino-acid chain; its full sequence is Regulatory protein opaque-2 (453 aa).

Positions 145–243 (SSVVTSDQRS…SNRESARRSR (99 aa)) are disordered. A compositionally biased stretch (polar residues) spans 146 to 175 (SVVTSDQRSQGSNNHTGGSSIRNNPVQNKL). Over residues 207-216 (PSDEDMDGEV) the composition is skewed to acidic residues. The segment covering 224-240 (PTEERVRKKESNRESAR) has biased composition (basic and acidic residues). The 64-residue stretch at 225–288 (TEERVRKKES…NDANVDNRVL (64 aa)) folds into the bZIP domain. The segment at 228-251 (RVRKKESNRESARRSRYRKAAHLK) is basic motif. Residues 253 to 274 (LEDQVAQLKAENSCLLRRIAAL) are leucine-zipper.

Belongs to the bZIP family. In terms of assembly, interacts with the Dof zinc finger protein PBF. In terms of tissue distribution, seed endosperm.

The protein resides in the nucleus. In terms of biological role, involved in the regulation of the endosperm-specific production of albumin b-32 and other zein proteins. It is a trans-acting transcriptional activator that binds to the consensus sequence 5'-GATGAYRTGR-3'. This is Regulatory protein opaque-2 (O2) from Zea mays (Maize).